Consider the following 189-residue polypeptide: Translation initiation factor IF-3 (189 aa).

The protein belongs to the IF-3 family. In terms of assembly, monomer.

It localises to the cytoplasm. Its function is as follows. IF-3 binds to the 30S ribosomal subunit and shifts the equilibrium between 70S ribosomes and their 50S and 30S subunits in favor of the free subunits, thus enhancing the availability of 30S subunits on which protein synthesis initiation begins. The polypeptide is Translation initiation factor IF-3 (Corynebacterium glutamicum (strain R)).